Reading from the N-terminus, the 323-residue chain is Annexin A3 (323 aa).

Ala-2 is subject to N-acetylalanine. Annexin repeat units lie at residues 18 to 89 (FSPS…ALVT), 90 to 161 (APAL…TLAD), 173 to 245 (HLAK…AIVH), and 249 to 320 (NTPA…KICG). Lys-177 carries the post-translational modification N6-acetyllysine. Residue Thr-267 is modified to Phosphothreonine.

The protein belongs to the annexin family.

In terms of biological role, inhibitor of phospholipase A2, also possesses anti-coagulant properties. This chain is Annexin A3 (Anxa3), found in Mus musculus (Mouse).